Consider the following 80-residue polypeptide: Delta-actitoxin-Amc2a (80 aa).

The first 19 residues, 1 to 19 (MNKVLFLCLVVLCATSAFA), serve as a signal peptide directing secretion. Positions 20 to 30 (AEEEYVERAPV) are excised as a propeptide. Disulfide bonds link Cys37/Cys73, Cys39/Cys65, and Cys55/Cys74. Pro56 carries the hydroxyproline modification.

It belongs to the sea anemone type 3 (BDS) potassium channel toxin family.

Its subcellular location is the secreted. The protein resides in the nematocyst. Its function is as follows. Neurotoxon that induces paralysis when injected into crabs. The sequence is that of Delta-actitoxin-Amc2a from Antheopsis maculata (Sea anemone).